A 795-amino-acid polypeptide reads, in one-letter code: Phenylalanine--tRNA ligase beta subunit (795 aa).

Positions 39-148 (AGEFNGVVVG…ADAPIGVDVR (110 aa)) constitute a tRNA-binding domain. In terms of domain architecture, B5 spans 401-476 (PKQATITLRR…RIYGYNNIPD (76 aa)). Mg(2+) is bound by residues Asp-454, Asp-460, Glu-463, and Glu-464. The 94-residue stretch at 701-794 (SRFPANRRDI…LKQRFQASLR (94 aa)) folds into the FDX-ACB domain.

The protein belongs to the phenylalanyl-tRNA synthetase beta subunit family. Type 1 subfamily. In terms of assembly, tetramer of two alpha and two beta subunits. It depends on Mg(2+) as a cofactor.

Its subcellular location is the cytoplasm. It carries out the reaction tRNA(Phe) + L-phenylalanine + ATP = L-phenylalanyl-tRNA(Phe) + AMP + diphosphate + H(+). The protein is Phenylalanine--tRNA ligase beta subunit of Yersinia pestis.